A 1033-amino-acid chain; its full sequence is Complement receptor type 2 (1033 aa).

A signal peptide spans 1 to 20; sequence MGAAGLLGVFLALVAPGVLG. 15 consecutive Sushi domains span residues 21–84, 89–148, 152–212, 213–273, 274–344, 349–408, 409–468, 469–524, 525–595, 600–659, 660–716, 717–781, 786–845, 849–909, and 910–970; these read ISCG…KCEY, SSCP…TCVS, LECP…TCEE, ARCK…VCEE, IFCP…RCEL, VQCP…VCEK, ECQA…QCKV, AACE…LCKE, ITCP…LCKL, VQCS…VCEK, ETCQ…LCKV, IHCH…QCLR, TRCP…TCIK, IGCP…HCKE, and VNCS…VCRS. Residues 21–971 lie on the Extracellular side of the membrane; it reads ISCGSPPPIL…NPPLAVCRSR (951 aa). 28 cysteine pairs are disulfide-bonded: Cys-23/Cys-65, Cys-51/Cys-82, Cys-91/Cys-132, Cys-118/Cys-146, Cys-154/Cys-197, Cys-183/Cys-210, Cys-215/Cys-256, Cys-242/Cys-271, Cys-276/Cys-325, Cys-305/Cys-342, Cys-351/Cys-393, Cys-379/Cys-406, Cys-410/Cys-453, Cys-439/Cys-466, Cys-471/Cys-509, Cys-495/Cys-522, Cys-527/Cys-576, Cys-556/Cys-593, Cys-602/Cys-644, Cys-630/Cys-657, Cys-662/Cys-699, Cys-685/Cys-714, Cys-719/Cys-762, Cys-748/Cys-779, Cys-788/Cys-830, Cys-816/Cys-843, Cys-851/Cys-894, and Cys-880/Cys-907. 2 N-linked (GlcNAc...) asparagine glycosylation sites follow: Asn-121 and Asn-127. A glycan (N-linked (GlcNAc...) asparagine) is linked at Asn-294. N-linked (GlcNAc...) asparagine glycosylation occurs at Asn-372. A glycan (N-linked (GlcNAc...) asparagine) is linked at Asn-492. Asn-623 carries N-linked (GlcNAc...) asparagine glycosylation. The N-linked (GlcNAc...) asparagine glycan is linked to Asn-682. N-linked (GlcNAc...) asparagine glycosylation is found at Asn-800, Asn-823, and Asn-861. A glycan (N-linked (GlcNAc...) asparagine) is linked at Asn-911. Disulfide bonds link Cys-912-Cys-955 and Cys-941-Cys-968. A helical membrane pass occupies residues 972 to 999; it reads SLAPVLCGIAAGLILLTFLIVITLYVIS. At 1000–1033 the chain is on the cytoplasmic side; that stretch reads KHRARNYYTDTSQKEAFHLEAREVYSVDPYNPAS.

Belongs to the receptors of complement activation (RCA) family. As to quaternary structure, interacts (via Sushi domain 1 and 2) with C3. Interacts with CD19. Part of a complex composed of CD19, CR2/CD21, CD81 and IFITM1/CD225 in the membrane of mature B-cells. Interacts (via Sushi domain 1 and 2) with FCER2 (via the C-terminus). Interacts with CD23. Interacts with FCRL5. Interacts with CR1. Interacts with INFNA1. In terms of assembly, (Microbial infection) Interacts with Epstein-Barr virus gp350 protein. Mature B-lymphocytes, T-lymphocytes, pharyngeal epithelial cells, astrocytes and follicular dendritic cells of the spleen.

Its subcellular location is the cell membrane. Serves as a receptor for various ligands including complement component CD3d, HNRNPU OR IFNA1. When C3d is bound to antigens, attaches to C3d on B-cell surface and thereby facilitates the recognition and uptake of antigens by B-cells. This interaction enhances B-cell activation and subsequent immune responses. Forms a complex with several partners on the surface of B-cells including CD19, FCRL5 and CD81, to form the B-cell coreceptor complex that plays a crucial role in B-cell activation and signaling. Also induces specific intracellular signaling separately from the BCR and CD19 by activating the tyrosine kinase SRC, which then phosphorylates nucleolin/NCL and triggers AKT and GSK3 kinase activities in a SYK/CD19-independent manner. Acts as a ligand for CD23 (FcepsilonRII), a low-affinity receptor for IgE, which is expressed on B-cells and other immune cells, and thus participates in the regulation of IgE production. In terms of biological role, (Microbial infection) Acts as a receptor for Epstein-Barr virus. The polypeptide is Complement receptor type 2 (CR2) (Homo sapiens (Human)).